Consider the following 295-residue polypeptide: Ribosomal protein L11 methyltransferase (295 aa).

Thr138, Gly161, Asp183, and Asn230 together coordinate S-adenosyl-L-methionine.

It belongs to the methyltransferase superfamily. PrmA family.

It is found in the cytoplasm. It carries out the reaction L-lysyl-[protein] + 3 S-adenosyl-L-methionine = N(6),N(6),N(6)-trimethyl-L-lysyl-[protein] + 3 S-adenosyl-L-homocysteine + 3 H(+). Its function is as follows. Methylates ribosomal protein L11. The polypeptide is Ribosomal protein L11 methyltransferase (Bradyrhizobium diazoefficiens (strain JCM 10833 / BCRC 13528 / IAM 13628 / NBRC 14792 / USDA 110)).